The chain runs to 298 residues: Tyrosine recombinase XerD (298 aa).

The region spanning 2–87 is the Core-binding (CB) domain; sequence KQELARIEQF…AVRRLFQYLY (86 aa). Residues 108–292 form the Tyr recombinase domain; it reads RLPKDLSEAQ…ATERLRQLHQ (185 aa). Catalysis depends on residues Arg148, Lys172, His244, Arg247, and His270. The O-(3'-phospho-DNA)-tyrosine intermediate role is filled by Tyr279.

The protein belongs to the 'phage' integrase family. XerD subfamily. As to quaternary structure, forms a cyclic heterotetrameric complex composed of two molecules of XerC and two molecules of XerD, in which XerC interacts with XerD via its C-terminal region, XerD interacts with XerC via its C-terminal region and so on.

Its subcellular location is the cytoplasm. Its activity is regulated as follows. FtsK may regulate the catalytic switch between XerC and XerD in the heterotetrameric complex during the two steps of the recombination process. In terms of biological role, site-specific tyrosine recombinase, which acts by catalyzing the cutting and rejoining of the recombining DNA molecules. Binds cooperatively to specific DNA consensus sequences that are separated from XerC binding sites by a short central region, forming the heterotetrameric XerC-XerD complex that recombines DNA substrates. The complex is essential to convert dimers of the bacterial chromosome into monomers to permit their segregation at cell division. It also contributes to the segregational stability of plasmids. In the complex XerD specifically exchanges the bottom DNA strands. The protein is Tyrosine recombinase XerD of Shigella flexneri.